A 131-amino-acid chain; its full sequence is Class I hydrophobin 9 (131 aa).

Positions 1–23 (MFARRAISIFAFMLVALSIFAAA) are cleaved as a signal peptide. Cystine bridges form between Cys52–Cys112, Cys59–Cys106, Cys60–Cys93, and Cys113–Cys126. Asn53 carries an N-linked (GlcNAc...) asparagine glycan. The N-linked (GlcNAc...) asparagine glycan is linked to Asn115.

The protein belongs to the fungal hydrophobin family. Self-assembles to form functional amyloid fibrils called rodlets. Self-assembly into fibrillar rodlets occurs spontaneously at hydrophobic:hydrophilic interfaces and the rodlets further associate laterally to form amphipathic monolayers.

Its subcellular location is the secreted. The protein localises to the cell wall. Functionally, aerial growth, conidiation, and dispersal of filamentous fungi in the environment rely upon a capability of their secreting small amphipathic proteins called hydrophobins (HPBs) with low sequence identity. Class I can self-assemble into an outermost layer of rodlet bundles on aerial cell surfaces, conferring cellular hydrophobicity that supports fungal growth, development and dispersal; whereas Class II form highly ordered films at water-air interfaces through intermolecular interactions but contribute nothing to the rodlet structure. This chain is Class I hydrophobin 9, found in Flammulina velutipes (Agaricus velutipes).